The chain runs to 330 residues: SUMO-activating enzyme subunit 1 (330 aa).

Belongs to the ubiquitin-activating E1 family. As to quaternary structure, heterodimer of sae1 and sae2. The complex binds sumo via sae2.

It localises to the nucleus. It functions in the pathway protein modification; protein sumoylation. The dimeric enzyme acts as an E1 ligase for sumo. It mediates ATP-dependent activation of sumo and formation of a thioester with a conserved cysteine residue on sae2. In Dictyostelium discoideum (Social amoeba), this protein is SUMO-activating enzyme subunit 1 (sae1).